The following is a 159-amino-acid chain: MGGLKKPKKKYLEGKPKKIWNKQLLLEELQLVGEYGLRNKKELWLARAHLKWIVRRARSLLSMTPEERAPLELPFKEKLYKMGFIEDPNVPLDRILSLDVRAILERRLQTIVYRKGLAKSIYHARQLVVHGHVAVAGRRVTSPGFLVPRDLEDKITLIE.

One can recognise an S4 RNA-binding domain in the interval 106-158; the sequence is RRLQTIVYRKGLAKSIYHARQLVVHGHVAVAGRRVTSPGFLVPRDLEDKITLI.

This sequence belongs to the universal ribosomal protein uS4 family. In terms of assembly, part of the 30S ribosomal subunit. Contacts protein S5. The interaction surface between S4 and S5 is involved in control of translational fidelity.

Functionally, one of the primary rRNA binding proteins, it binds directly to 16S rRNA where it nucleates assembly of the body of the 30S subunit. In terms of biological role, with S5 and S12 plays an important role in translational accuracy. The polypeptide is Small ribosomal subunit protein uS4 (Pyrobaculum islandicum (strain DSM 4184 / JCM 9189 / GEO3)).